We begin with the raw amino-acid sequence, 673 residues long: MTALAYYQIHLIYTLPILGLLGLLTSPILTKFDIYKISILVFIAFSATTPWDSWIIRNGAWTYPSAESGQGVFGTFLDVPYEEYAFFVIQTVITGLVYVLATRHLLPSLALPKTRSSALSLALKALIPLPIIYLFTAHPSPSPDPLVTDHYFYMRALSLLITPPTMLLAALSGEYAFDWKSGRAKSTIAAIMIPTVYLIWVDYVAVGQDSWSINDEKIVGWRLGGVLPIEEAMFFLLTNLMIVLGLSACDHTQALYLLHGRTIYGNKKMPSSFPLITPPVLSLFFSSRPYSSQPKRDLELAVKLLEEKSRSFFVASAGFPSEVRERLVGLYAFCRVTDDLIDSPEVSSNPHATIDMVSDFLTLLFGPPLHPSQPDKILSSPLLPPSHPSRPTGMYPLPPPPSLSPAELVQFLTERVPVQYHFAFRLLAKLQGLIPRYPLDELLRGYTTDLIFPLSTEAVQARKTPIETTADLLDYGLCVAGSVAELLVYVSWASAPSQVPATIEEREAVLVASREMGTALQLVNIARDIKGDATEGRFYLPLSFFGLRDESKLAIPTDWTEPRPQDFDKLLSLSPSSTLPSSNASESFRFEWKTYSLPLVAYAEDLAKHSYKGIDRLPTEVQAGMRAACASYLLIGREIKVVWKGDVGERRTVAGWRRVRKVLSVVMSGWEGQ.

A lycopene beta-cyclase region spans residues 1–251; sequence MTALAYYQIH…IVLGLSACDH (251 aa). Helical transmembrane passes span 9–29, 36–56, 81–101, 117–137, 157–177, 187–207, and 226–246; these read IHLIYTLPILGLLGLLTSPIL, KISILVFIAFSATTPWDSWII, YEEYAFFVIQTVITGLVYVLA, SALSLALKALIPLPIIYLFTA, LSLLITPPTMLLAALSGEYAF, TIAAIMIPTVYLIWVDYVAVG, and VLPIEEAMFFLLTNLMIVLGL. The segment at 258–673 is phytoene synthase; sequence LHGRTIYGNK…SVVMSGWEGQ (416 aa). The interval 376 to 399 is disordered; sequence KILSSPLLPPSHPSRPTGMYPLPP.

It in the N-terminal section; belongs to the lycopene beta-cyclase family. In the C-terminal section; belongs to the phytoene/squalene synthase family.

It localises to the membrane. It catalyses the reaction all-trans-lycopene = gamma-carotene. It carries out the reaction gamma-carotene = all-trans-beta-carotene. The catalysed reaction is 2 (2E,6E,10E)-geranylgeranyl diphosphate = 15-cis-phytoene + 2 diphosphate. The protein operates within carotenoid biosynthesis; beta-carotene biosynthesis. It functions in the pathway carotenoid biosynthesis; phytoene biosynthesis; all-trans-phytoene from geranylgeranyl diphosphate: step 1/1. Bifunctional enzyme that catalyzes the reactions from geranylgeranyl diphosphate to phytoene (phytoene synthase) and lycopene to beta-carotene via the intermediate gamma-carotene (lycopene cyclase). The cyclase preferentially catalyzes the symmetric cyclization of both ends of the substrate to produce dicyclic carotenoids. Beta-carotene is further processed to the acidic carotenoid astaxanthin. The polypeptide is Bifunctional lycopene cyclase/phytoene synthase (Phaffia rhodozyma (Yeast)).